The primary structure comprises 142 residues: Cystatin-8 (142 aa).

Positions 1 to 19 (MAKPLWLSLILFIIPVALA) are cleaved as a signal peptide. N39 is a glycosylation site (N-linked (GlcNAc...) asparagine). Residues 77-81 (QITDR) carry the Secondary area of contact motif. Intrachain disulfides connect C95/C105 and C119/C139. N100 carries an N-linked (GlcNAc...) asparagine glycan.

Belongs to the cystatin family. In terms of tissue distribution, proximal caput region of the epididymis. Lower expression in the testis. Within the testis it is localized to the elongating spermatids, whereas within the epididymis it is exclusively synthesized by the proximal caput epithelium.

The protein localises to the secreted. Performs a specialized role during sperm development and maturation. This chain is Cystatin-8 (Cst8), found in Mus musculus (Mouse).